The chain runs to 462 residues: Cysteine--tRNA ligase (462 aa).

Cys-30 is a binding site for Zn(2+). The 'HIGH' region motif lies at Met-32 to His-42. Zn(2+) is bound by residues Cys-214, His-239, and Glu-243. The 'KMSKS' region motif lies at Lys-271–Ser-275. Residue Lys-274 coordinates ATP.

This sequence belongs to the class-I aminoacyl-tRNA synthetase family. In terms of assembly, monomer. Zn(2+) is required as a cofactor.

Its subcellular location is the cytoplasm. It catalyses the reaction tRNA(Cys) + L-cysteine + ATP = L-cysteinyl-tRNA(Cys) + AMP + diphosphate. This chain is Cysteine--tRNA ligase, found in Cupriavidus pinatubonensis (strain JMP 134 / LMG 1197) (Cupriavidus necator (strain JMP 134)).